We begin with the raw amino-acid sequence, 152 residues long: Xanthine-guanine phosphoribosyltransferase (152 aa).

5-phospho-alpha-D-ribose 1-diphosphate contacts are provided by residues 37–38 (RG), R69, and 88–96 (DDLVDTGGT). R69 serves as a coordination point for GMP. Residue D89 coordinates Mg(2+). Guanine is bound by residues D92 and I135. The xanthine site is built by D92 and I135. GMP is bound by residues 92–96 (DTGGT) and 134–135 (WI).

This sequence belongs to the purine/pyrimidine phosphoribosyltransferase family. XGPT subfamily. In terms of assembly, homotetramer. Requires Mg(2+) as cofactor.

It localises to the cell inner membrane. The catalysed reaction is GMP + diphosphate = guanine + 5-phospho-alpha-D-ribose 1-diphosphate. The enzyme catalyses XMP + diphosphate = xanthine + 5-phospho-alpha-D-ribose 1-diphosphate. It catalyses the reaction IMP + diphosphate = hypoxanthine + 5-phospho-alpha-D-ribose 1-diphosphate. Its pathway is purine metabolism; GMP biosynthesis via salvage pathway; GMP from guanine: step 1/1. It participates in purine metabolism; XMP biosynthesis via salvage pathway; XMP from xanthine: step 1/1. Its function is as follows. Purine salvage pathway enzyme that catalyzes the transfer of the ribosyl-5-phosphate group from 5-phospho-alpha-D-ribose 1-diphosphate (PRPP) to the N9 position of the 6-oxopurines guanine and xanthine to form the corresponding ribonucleotides GMP (guanosine 5'-monophosphate) and XMP (xanthosine 5'-monophosphate), with the release of PPi. To a lesser extent, also acts on hypoxanthine. This is Xanthine-guanine phosphoribosyltransferase from Escherichia coli O127:H6 (strain E2348/69 / EPEC).